A 177-amino-acid polypeptide reads, in one-letter code: Cell division protein ZapC (177 aa).

The protein belongs to the ZapC family. Interacts directly with FtsZ.

It is found in the cytoplasm. Its function is as follows. Contributes to the efficiency of the cell division process by stabilizing the polymeric form of the cell division protein FtsZ. Acts by promoting interactions between FtsZ protofilaments and suppressing the GTPase activity of FtsZ. In Shewanella oneidensis (strain ATCC 700550 / JCM 31522 / CIP 106686 / LMG 19005 / NCIMB 14063 / MR-1), this protein is Cell division protein ZapC.